A 133-amino-acid chain; its full sequence is Small ribosomal subunit protein uS8 (133 aa).

The protein belongs to the universal ribosomal protein uS8 family. Part of the 30S ribosomal subunit.

In terms of biological role, one of the primary rRNA binding proteins, it binds directly to 16S rRNA central domain where it helps coordinate assembly of the platform of the 30S subunit. The polypeptide is Small ribosomal subunit protein uS8 (Aeropyrum pernix (strain ATCC 700893 / DSM 11879 / JCM 9820 / NBRC 100138 / K1)).